We begin with the raw amino-acid sequence, 475 residues long: Cobyric acid synthase (475 aa).

The GATase cobBQ-type domain occupies 244 to 431 (KLNVVVPVLT…LHGFFDEADV (188 aa)). Cysteine 325 serves as the catalytic Nucleophile. Residue histidine 423 is part of the active site.

This sequence belongs to the CobB/CobQ family. CobQ subfamily.

Its pathway is cofactor biosynthesis; adenosylcobalamin biosynthesis. Its function is as follows. Catalyzes amidations at positions B, D, E, and G on adenosylcobyrinic A,C-diamide. NH(2) groups are provided by glutamine, and one molecule of ATP is hydrogenolyzed for each amidation. This Vibrio campbellii (strain ATCC BAA-1116) protein is Cobyric acid synthase.